The following is a 500-amino-acid chain: Probable malate:quinone oxidoreductase (500 aa).

The protein belongs to the MQO family. FAD serves as cofactor.

The enzyme catalyses (S)-malate + a quinone = a quinol + oxaloacetate. Its pathway is carbohydrate metabolism; tricarboxylic acid cycle; oxaloacetate from (S)-malate (quinone route): step 1/1. This chain is Probable malate:quinone oxidoreductase, found in Gluconobacter oxydans (strain 621H) (Gluconobacter suboxydans).